The chain runs to 153 residues: Aspartate carbamoyltransferase regulatory chain (153 aa).

Residues Cys-109, Cys-114, Cys-138, and Cys-141 each contribute to the Zn(2+) site.

This sequence belongs to the PyrI family. As to quaternary structure, contains catalytic and regulatory chains. The cofactor is Zn(2+).

Functionally, involved in allosteric regulation of aspartate carbamoyltransferase. This is Aspartate carbamoyltransferase regulatory chain from Shigella flexneri serotype 5b (strain 8401).